A 367-amino-acid chain; its full sequence is MMGSVLPAEALVLKTGLKAPGLALAEVITSDILHSFLYGRWRNVLGEQLFEDKSHHASPKTAFTAEVLAQSFSGEVQKLSSLVLPAEVIIAQSSIPGEGLGIFSKTWIKAGTEMGPFTGRVIAPEHVDICKNNNLMWEVFNEDGTVRYFIDASQEDHRSWMTYIKCARNEQEQNLEVVQIGTSIFYKAIEMIPPDQELLVWYGNSHNTFLGIPGVPGLEEDQKKNKHEDFHPADSAAGPAGRMRCVICHRGFNSRSNLRSHMRIHTLDKPFVCRFCNRRFSQSSTLRNHVRLHTGERPYKCQVCQSAYSQLAGLRAHQKSARHRPPSTALQAHSPALPAPHAHAPALAAAAAAAAAAAAHHLPAMVL.

The SET domain maps to Ala86–Gly203. 3 consecutive C2H2-type zinc fingers follow at residues Met243–His265, Phe271–His293, and Tyr299–His323. The segment at Gln318–Leu337 is disordered.

The protein belongs to the class V-like SAM-binding methyltransferase superfamily. As to quaternary structure, interacts with EHMT2. In terms of tissue distribution, not found in adult tissues except in dorsal root ganglia.

It localises to the nucleus. Its function is as follows. Transcriptional regulator necessary for the development of nociceptive neurons, playing a key role in determining the nociceptive lineage from neural crest cell progenitors. Initiates neurogenesis and activates downstream pro-neuronal transcription factors, such as NEUROD1, BRN3A, and ISL1, specifically within nociceptive neurons, while repressing non-nociceptor cell fates. Essential for the proper function of nociceptors in adults, influencing both their excitability and their gene expression, thereby impacting how these neurons respond to various pain stimuli. In Homo sapiens (Human), this protein is PR domain zinc finger protein 12 (PRDM12).